Here is a 221-residue protein sequence, read N- to C-terminus: Extracellular superoxide dismutase [Cu-Zn] (221 aa).

The signal sequence occupies residues Met-1–Ser-19. A glycan (N-linked (GlcNAc...) asparagine) is linked at Asn-56. His-70, His-72, and His-87 together coordinate Cu cation. A disulfide bridge connects residues Cys-81 and Cys-170. His-87, His-95, His-104, and Asp-107 together coordinate Zn(2+). His-144 is a binding site for Cu cation.

This sequence belongs to the Cu-Zn superoxide dismutase family. The cofactor is Cu cation. Zn(2+) serves as cofactor. In terms of tissue distribution, isoform 2 is preferentially expressed in eggs.

The protein localises to the secreted. It localises to the extracellular space. Its subcellular location is the membrane. It catalyses the reaction 2 superoxide + 2 H(+) = H2O2 + O2. Protects cells against oxidative stress by converting superoxide radicals to hydrogen peroxide. Oxidative stress is involved in various biological dysfunctions and senescence. This chain is Extracellular superoxide dismutase [Cu-Zn] (sod-4), found in Caenorhabditis elegans.